A 290-amino-acid polypeptide reads, in one-letter code: MNEFVIDKKAMRQAFSRAAEGYDASAVLQREVCMRMLERLEYIKLQPARLLDAGSGTGWGGRQLAEKYPAAQVISLDIAIGMLQTSKSRSSWWQKLFGGCRQLPVCADVEALPLAANSLDMVWSNLAVQWCNDLPATFVELHRVLKTEGLLMFSTLGPDTLKELRQAFKGVDERSHLNRFADMHDIGDMLVQAGFAEPVMDMEYLTLTYEDVRGVLQDLKAIGAHNTTAGRGQGLMGKAAWARLLENYEKLRRDGKLPATYEVVYGHAWKPAPRVNRDGAAIIKTSFKIK.

It belongs to the methyltransferase superfamily.

It carries out the reaction malonyl-[ACP] + S-adenosyl-L-methionine = malonyl-[ACP] methyl ester + S-adenosyl-L-homocysteine. It functions in the pathway cofactor biosynthesis; biotin biosynthesis. Converts the free carboxyl group of a malonyl-thioester to its methyl ester by transfer of a methyl group from S-adenosyl-L-methionine (SAM). It allows to synthesize pimeloyl-ACP via the fatty acid synthetic pathway. In Gallionella capsiferriformans (strain ES-2) (Gallionella ferruginea capsiferriformans (strain ES-2)), this protein is Malonyl-[acyl-carrier protein] O-methyltransferase.